Reading from the N-terminus, the 342-residue chain is Dihydroorotate dehydrogenase (quinone) (342 aa).

Residues Ala-61–Lys-65 and Thr-85 each bind FMN. Residue Lys-65 participates in substrate binding. Asn-110 to Phe-114 lines the substrate pocket. Positions 138 and 171 each coordinate FMN. Asn-171 contacts substrate. The active-site Nucleophile is the Ser-174. Residue Asn-176 coordinates substrate. Positions 216 and 244 each coordinate FMN. Asn-245 to Thr-246 contacts substrate. Residues Gly-267, Gly-296, and Tyr-317 to Ser-318 each bind FMN.

This sequence belongs to the dihydroorotate dehydrogenase family. Type 2 subfamily. Monomer. The cofactor is FMN.

It localises to the cell membrane. It carries out the reaction (S)-dihydroorotate + a quinone = orotate + a quinol. Its pathway is pyrimidine metabolism; UMP biosynthesis via de novo pathway; orotate from (S)-dihydroorotate (quinone route): step 1/1. In terms of biological role, catalyzes the conversion of dihydroorotate to orotate with quinone as electron acceptor. The polypeptide is Dihydroorotate dehydrogenase (quinone) (Pseudomonas aeruginosa (strain UCBPP-PA14)).